Consider the following 188-residue polypeptide: MANNDEITTSSHASPAVNHESISRAKQRIKDGLATRRSWRVMFDLHSTGLPHGVSDVFSRIKTNLAYFRSNYAIVILNVIFFSLIWHPTSLIVFTGLVFLWIFLYFLRDVPLKVFRFQIDDRAVLIGLSVITIVLLLLTNATFNIVAALMAGAVLVLIHAVIRKTDDLFLDEEAATTETSGLTSHPSS.

A compositionally biased stretch (polar residues) spans 1 to 13 (MANNDEITTSSHA). Residues 1–25 (MANNDEITTSSHASPAVNHESISRA) are disordered. The next 4 membrane-spanning stretches (helical) occupy residues 67–86 (YFRSNYAIVILNVIFFSLIW), 90–107 (SLIVFTGLVFLWIFLYFL), 119–139 (IDDRAVLIGLSVITIVLLLLT), and 142–162 (TFNIVAALMAGAVLVLIHAVI).

The protein belongs to the PRA1 family.

The protein localises to the endosome membrane. May be involved in both secretory and endocytic intracellular trafficking in the endosomal/prevacuolar compartments. This is PRA1 family protein F4 (PRA1F4) from Arabidopsis thaliana (Mouse-ear cress).